The primary structure comprises 81 residues: Photosystem I iron-sulfur center (81 aa).

4Fe-4S ferredoxin-type domains lie at 2-31 (SHAV…MVPW) and 37-68 (GQIA…IRVY). [4Fe-4S] cluster is bound by residues cysteine 11, cysteine 14, cysteine 17, cysteine 21, cysteine 48, cysteine 51, cysteine 54, and cysteine 58.

As to quaternary structure, the cyanobacterial PSI reaction center is composed of one copy each of PsaA,B,C,D,E,F,I,J,K,L,M and X, and forms trimeric complexes. The cofactor is [4Fe-4S] cluster.

The protein resides in the cellular thylakoid membrane. The enzyme catalyses reduced [plastocyanin] + hnu + oxidized [2Fe-2S]-[ferredoxin] = oxidized [plastocyanin] + reduced [2Fe-2S]-[ferredoxin]. In terms of biological role, apoprotein for the two 4Fe-4S centers FA and FB of photosystem I (PSI); essential for photochemical activity. FB is the terminal electron acceptor of PSI, donating electrons to ferredoxin. The C-terminus interacts with PsaA/B/D and helps assemble the protein into the PSI complex. Required for binding of PsaD and PsaE to PSI. PSI is a plastocyanin/cytochrome c6-ferredoxin oxidoreductase, converting photonic excitation into a charge separation, which transfers an electron from the donor P700 chlorophyll pair to the spectroscopically characterized acceptors A0, A1, FX, FA and FB in turn. This chain is Photosystem I iron-sulfur center, found in Prochlorococcus marinus subsp. pastoris (strain CCMP1986 / NIES-2087 / MED4).